The following is a 406-amino-acid chain: Bifunctional enzyme Fae/Hps (406 aa).

The interval 1–164 (MSDIYEIGEA…AEKDRGTHPI (164 aa)) is formaldehyde-activating enzyme. The active-site Proton donor is H20. Positions 22, 51, 69, 71, and 86 each coordinate substrate. Positions 165-406 (MGFKAMKLWN…RLALDEDEKI (242 aa)) are 3-hexulose-6-phosphate synthase.

In the N-terminal section; belongs to the formaldehyde-activating enzyme family. This sequence in the C-terminal section; belongs to the HPS/KGPDC family. HPS subfamily.

The enzyme catalyses 5,6,7,8-tetrahydromethanopterin + formaldehyde = 5,10-methylenetetrahydromethanopterin + H2O. The catalysed reaction is D-ribulose 5-phosphate + formaldehyde = D-arabino-hex-3-ulose 6-phosphate. Its pathway is carbohydrate biosynthesis; D-ribose 5-phosphate biosynthesis. Catalyzes the condensation of formaldehyde with tetrahydromethanopterin (H(4)MPT) to 5,10-methylenetetrahydromethanopterin. In terms of biological role, catalyzes the reversible formation of ribulose-5-phosphate and formaldehyde from 3-hexulose-6-phosphate. This is Bifunctional enzyme Fae/Hps from Methanosphaera stadtmanae (strain ATCC 43021 / DSM 3091 / JCM 11832 / MCB-3).